Here is a 559-residue protein sequence, read N- to C-terminus: Actin-binding protein WASF1 (559 aa).

Disordered regions lie at residues 170-202, 304-383, and 412-490; these read EDKR…DRRR, IENR…GVLH, and VHPL…HPST. Residues 182-202 show a composition bias toward basic and acidic residues; the sequence is KNLDRPHEPEKVPRAPHDRRR. Polar residues predominate over residues 304 to 313; it reads IENRPQSPAT. Positions 322-332 are enriched in pro residues; sequence PTPPPPPPPLP. The span at 333–346 shows a compositional bias: low complexity; it reads SALSTSSLRASMTS. R341 carries the asymmetric dimethylarginine; alternate modification. R341 bears the Omega-N-methylarginine; alternate mark. 3 stretches are compositionally biased toward pro residues: residues 347–360, 423–437, and 460–477; these read TPPP…PPPA, LPPP…PPGI, and STAP…PPSQ. S489 is modified (phosphoserine). Residues 497 to 514 enclose the WH2 domain; the sequence is ARSVLLEAIRKGIQLRKV.

The protein belongs to the SCAR/WAVE family. In terms of assembly, component of the WAVE1 complex composed of ABI2, CYFIP1 or CYFIP2, BRK1, NCKAP1 and WASF1/WAVE1. Within the complex, a heterodimer containing NCKAP1 and CYFIP1 interacts with a heterotrimer formed by WAVE1, ABI2 and BRK1. CYFIP2 binds to activated RAC1 which causes the complex to dissociate, releasing activated WASF1. The complex can also be activated by NCK1. Binds actin and the Arp2/3 complex. Interacts with BAIAP2. Interacts with SHANK3; the interaction mediates the association of SHANK3 with the WAVE1 complex. Interacts with ABI1 (via N-terminus). Interacts with SORBS2; this interaction greatly enhances phosphorylation by ABL1 and dephosphorylation by PTPN12 and might mediate partial to focal adhesion sites.

Its subcellular location is the cytoplasm. It localises to the cytoskeleton. The protein resides in the synapse. It is found in the cell junction. The protein localises to the focal adhesion. Functionally, downstream effector molecule involved in the transmission of signals from tyrosine kinase receptors and small GTPases to the actin cytoskeleton. Promotes formation of actin filaments. Part of the WAVE complex that regulates lamellipodia formation. The WAVE complex regulates actin filament reorganization via its interaction with the Arp2/3 complex. As component of the WAVE1 complex, required for BDNF-NTRK2 endocytic trafficking and signaling from early endosomes. Also involved in the regulation of mitochondrial dynamics. The sequence is that of Actin-binding protein WASF1 (WASF1) from Pongo abelii (Sumatran orangutan).